The sequence spans 199 residues: Single-stranded DNA cytosine deaminase (199 aa).

The short motif at 1–30 is the Bipartite nuclear localization signal element; that stretch reads MDSLLKKQRQFLYQFKNVRWAKGRHETYLC. The interaction with SUPT6H stretch occupies residues 2-26; the sequence is DSLLKKQRQFLYQFKNVRWAKGRHE. Positions 23–130 constitute a CMP/dCMP-type deaminase domain; sequence GRHETYLCYV…KAEPEGLRRL (108 aa). Position 27 is a phosphothreonine; by PKA (threonine 27). Residue serine 38 is modified to Phosphoserine; by PKA. The important for interaction with CTNNBL1 stretch occupies residues 39 to 42; sequence PTSF. Histidine 56 lines the Zn(2+) pocket. Glutamate 58 serves as the catalytic Proton donor. Positions 87 and 90 each coordinate Zn(2+). Residues 88–116 are required for interaction with RNF126; the sequence is YDCARHVADFLRGYPNLSLRIFTARLYFC. The Nuclear export signal motif lies at 184–199; that stretch reads LYEVDDLRDAFRTLGL.

The protein belongs to the cytidine and deoxycytidylate deaminase family. In terms of assembly, interacts with CTNNBL1; the interaction is important for the immunoglobulin switch activity of AICDA. Interacts (via its NLS) with KPNA1. Interacts with PKA/PRKACA and PRKAR1A/PKR1. Interacts with SUPT6H, TRIM28 and NCL. Directly interacts with MCM3AP; this interaction may favor AICDA recruitment to immunoglobulin variable region genes, hence promoting somatic hypermutations. Zn(2+) serves as cofactor. In terms of processing, ser-38 is the major site whereas Thr-27 is the minor site of phosphorylation. Phosphorylation regulates its class-switch recombination activity. Post-translationally, probably monoubiquitinated on several residues by RNF126. Expressed in lymph nodes, spleen and thymus.

The protein resides in the nucleus. Its subcellular location is the cytoplasm. The enzyme catalyses a 2'-deoxycytidine in single-stranded DNA + H2O + H(+) = a 2'-deoxyuridine in single-stranded DNA + NH4(+). Its function is as follows. Single-stranded DNA-specific cytidine deaminase. Involved in somatic hypermutation (SHM), gene conversion, and class-switch recombination (CSR) in B-lymphocytes by deaminating C to U during transcription of Ig-variable (V) and Ig-switch (S) region DNA. Required for several crucial steps of B-cell terminal differentiation necessary for efficient antibody responses. May also play a role in the epigenetic regulation of gene expression by participating in DNA demethylation. The protein is Single-stranded DNA cytosine deaminase (AICDA) of Bos taurus (Bovine).